The sequence spans 122 residues: Large ribosomal subunit protein uL14 (122 aa).

The protein belongs to the universal ribosomal protein uL14 family. As to quaternary structure, part of the 50S ribosomal subunit. Forms a cluster with proteins L3 and L19. In the 70S ribosome, L14 and L19 interact and together make contacts with the 16S rRNA in bridges B5 and B8.

Functionally, binds to 23S rRNA. Forms part of two intersubunit bridges in the 70S ribosome. The sequence is that of Large ribosomal subunit protein uL14 from Rhodospirillum centenum (strain ATCC 51521 / SW).